A 283-amino-acid polypeptide reads, in one-letter code: Zip homologous protein 4 (283 aa).

An RING-type zinc finger spans residues 6–50 (CFRCYKFPSKQIEFYLTNCMHMFCIECERLCHPPEEEPLKCIQCS). Disordered regions lie at residues 149–175 (KKQL…SSRS) and 201–283 (TKAQ…RNSQ). Residues 163-175 (PRSNSLKVASSRS) show a composition bias toward polar residues. A compositionally biased stretch (low complexity) spans 202-216 (KAQAKAEAEAEAPAK). Polar residues predominate over residues 220–235 (SKAQTTKCTSNYQSHP). A compositionally biased stretch (basic and acidic residues) spans 267–283 (KKHEAQREKHKEHRNSQ).

As to quaternary structure, interacts with zhp-3; the interaction is required for their localization along paired chromosomes and stability, and for the formation of chiasma during meiotic recombination. In terms of tissue distribution, expressed in the germline.

It is found in the chromosome. Recruited co-dependently with zhp-3 to the synaptonemal complex between homologous chromosome pairs to regulate the formation and number of crossover events between homologs during meiotic recombination. In the early stages of pachytene, in complex with zhp-4, recruited by the zhp-1-zhp-2 heterodimer to designated crossover sites along the recombination intermediate to stabilize other pro-crossover factors such as rmh-1, msh-5 and cosa-1. This in turn facilitates crossover and promotes the formation of chiasma in each meiotic nucleus at the late pachytene stage of meiosis. Negatively regulates double strand break formation to promote formation of the crossover intermediate. The protein is Zip homologous protein 4 of Caenorhabditis elegans.